The chain runs to 412 residues: Serine hydroxymethyltransferase (412 aa).

Residues leucine 117 and 121 to 123 (GHL) each bind (6S)-5,6,7,8-tetrahydrofolate. Lysine 226 carries the N6-(pyridoxal phosphate)lysine modification.

This sequence belongs to the SHMT family. As to quaternary structure, homodimer. The cofactor is pyridoxal 5'-phosphate.

Its subcellular location is the cytoplasm. It catalyses the reaction (6R)-5,10-methylene-5,6,7,8-tetrahydrofolate + glycine + H2O = (6S)-5,6,7,8-tetrahydrofolate + L-serine. The protein operates within one-carbon metabolism; tetrahydrofolate interconversion. Its pathway is amino-acid biosynthesis; glycine biosynthesis; glycine from L-serine: step 1/1. Its function is as follows. Catalyzes the reversible interconversion of serine and glycine with tetrahydrofolate (THF) serving as the one-carbon carrier. This reaction serves as the major source of one-carbon groups required for the biosynthesis of purines, thymidylate, methionine, and other important biomolecules. Also exhibits THF-independent aldolase activity toward beta-hydroxyamino acids, producing glycine and aldehydes, via a retro-aldol mechanism. This is Serine hydroxymethyltransferase from Staphylococcus saprophyticus subsp. saprophyticus (strain ATCC 15305 / DSM 20229 / NCIMB 8711 / NCTC 7292 / S-41).